Consider the following 81-residue polypeptide: Styelin-D (81 aa).

The N-terminal stretch at 1–22 (MQMKATILIVLVALFMIQQSEA) is a signal peptide. A 6'-bromotryptophan modification is found at W24. A 3,4-dihydroxyarginine modification is found at R26. 4,5-dihydroxylysine is present on residues K27, K30, and K34. Residues Y36 and Y37 each carry the 3',4'-dihydroxyphenylalanine modification. Position 38 is a 4,5-dihydroxylysine (K38). At K40 the chain carries 5-hydroxylysine. 3',4'-dihydroxyphenylalanine occurs at positions 41 and 42. The residue at position 44 (K44) is a 5-hydroxylysine. At L54 the chain carries Leucine amide. The propeptide at 56-81 (DMTDEEFQDFMKEVEQAREEELQSRQ) is removed in mature form.

In terms of processing, contains L-DOPA (3',4'-dihydroxyphenylalanine). As to expression, hemocytes and pharyngeal tissues.

The protein resides in the secreted. In terms of biological role, bactericidal against several Gram-positive and Gram-negative bacteria. Plays a significant role in the innate immune mechanisms of S.clava. The polypeptide is Styelin-D (Styela clava (Sea squirt)).